A 302-amino-acid chain; its full sequence is Putative gluconeogenesis factor (302 aa).

It belongs to the gluconeogenesis factor family.

The protein resides in the cytoplasm. Required for morphogenesis under gluconeogenic growth conditions. The protein is Putative gluconeogenesis factor (ybhK) of Escherichia coli O157:H7.